The sequence spans 326 residues: Biotin synthase (326 aa).

The 228-residue stretch at 47-274 (NEVQVSSLLS…ASRVRLSAGR (228 aa)) folds into the Radical SAM core domain. [4Fe-4S] cluster is bound by residues Cys-62, Cys-66, and Cys-69. [2Fe-2S] cluster-binding residues include Cys-106, Cys-137, Cys-197, and Arg-269.

Belongs to the radical SAM superfamily. Biotin synthase family. In terms of assembly, homodimer. The cofactor is [4Fe-4S] cluster. It depends on [2Fe-2S] cluster as a cofactor.

The catalysed reaction is (4R,5S)-dethiobiotin + (sulfur carrier)-SH + 2 reduced [2Fe-2S]-[ferredoxin] + 2 S-adenosyl-L-methionine = (sulfur carrier)-H + biotin + 2 5'-deoxyadenosine + 2 L-methionine + 2 oxidized [2Fe-2S]-[ferredoxin]. The protein operates within cofactor biosynthesis; biotin biosynthesis; biotin from 7,8-diaminononanoate: step 2/2. Catalyzes the conversion of dethiobiotin (DTB) to biotin by the insertion of a sulfur atom into dethiobiotin via a radical-based mechanism. This is Biotin synthase from Methylococcus capsulatus (strain ATCC 33009 / NCIMB 11132 / Bath).